Reading from the N-terminus, the 213-residue chain is CASP-like protein UU2 (213 aa).

Residues methionine 1–proline 26 form a disordered region. The Cytoplasmic portion of the chain corresponds to methionine 1–serine 53. Over residues aspartate 14–alanine 25 the composition is skewed to basic and acidic residues. A helical transmembrane segment spans residues isoleucine 54–isoleucine 74. Topologically, residues alanine 75–tyrosine 96 are extracellular. An N-linked (GlcNAc...) asparagine glycan is attached at asparagine 90. The chain crosses the membrane as a helical span at residues leucine 97–isoleucine 117. Topologically, residues asparagine 118 to threonine 137 are cytoplasmic. Residues tyrosine 138–leucine 158 traverse the membrane as a helical segment. Topologically, residues glutamine 159–alanine 184 are extracellular. Residues serine 185–leucine 205 form a helical membrane-spanning segment. Residues arginine 206–lysine 213 lie on the Cytoplasmic side of the membrane.

It belongs to the Casparian strip membrane proteins (CASP) family. As to quaternary structure, homodimer and heterodimers.

It is found in the cell membrane. This is CASP-like protein UU2 from Physcomitrium patens (Spreading-leaved earth moss).